The chain runs to 404 residues: Lupus La protein homolog (404 aa).

One can recognise an HTH La-type RNA-binding domain in the interval 7–99 (NEKMAALEAK…RRSPSKPLPE (93 aa)). 2 positions are modified to phosphoserine: Ser-92 and Ser-94. The RRM domain maps to 111–187 (RSVYIKGFPT…TDLLILFKED (77 aa)). An N6-acetyllysine modification is found at Lys-116. Phosphothreonine is present on Thr-120. Lys-128 bears the N6-acetyllysine mark. Phosphoserine is present on Ser-225. The xRRM domain maps to 227–348 (EEKIGCLLKF…KGKGNKAAQA (122 aa)). 2 positions are modified to N6-acetyllysine: Lys-328 and Lys-341. The span at 329–342 (WKSKGRRFKGKGKG) shows a compositional bias: basic residues. The segment at 329–404 (WKSKGRRFKG…QKTENGAGDQ (76 aa)) is disordered. Over residues 343-354 (NKAAQAGSAKGK) the composition is skewed to low complexity. Position 360 is an N6-acetyllysine (Lys-360). Thr-362 carries the post-translational modification Phosphothreonine. Ser-366 is modified (phosphoserine). Residues 381–391 (RAREETDKEPP) show a composition bias toward basic and acidic residues.

As to quaternary structure, interacts with DDX15. May interact with RUFY1. In terms of processing, phosphorylated in the C-terminal part of the protein.

The protein resides in the nucleus. Binds to the 3' poly(U) terminus of nascent RNA polymerase III transcripts, protecting them from exonuclease digestion and facilitating their folding and maturation. This Bos taurus (Bovine) protein is Lupus La protein homolog (SSB).